We begin with the raw amino-acid sequence, 138 residues long: Large ribosomal subunit protein bL17 (138 aa).

It belongs to the bacterial ribosomal protein bL17 family. Part of the 50S ribosomal subunit. Contacts protein L32.

This chain is Large ribosomal subunit protein bL17, found in Buchnera aphidicola subsp. Schizaphis graminum (strain Sg).